We begin with the raw amino-acid sequence, 518 residues long: Integrator complex subunit 14 (518 aa).

In terms of domain architecture, VWFA spans 2–204 (PTVVVMDVSL…KNVQSMFGKL (203 aa)). 3 residues coordinate Mg(2+): S10, S12, and T86. Residue K418 is modified to N6-acetyllysine.

The protein belongs to the Integrator subunit 14 family. Component of the Integrator complex, composed of core subunits INTS1, INTS2, INTS3, INTS4, INTS5, INTS6, INTS7, INTS8, INTS9/RC74, INTS10, INTS11/CPSF3L, INTS12, INTS13, INTS14 and INTS15. The core complex associates with protein phosphatase 2A subunits PPP2CA and PPP2R1A, to form the Integrator-PP2A (INTAC) complex. INTS14 is part of the tail subcomplex, composed of INTS10, INTS13, INTS14 and INTS15.

The protein resides in the nucleus. Its function is as follows. Component of the integrator complex, a multiprotein complex that terminates RNA polymerase II (Pol II) transcription in the promoter-proximal region of genes. The integrator complex provides a quality checkpoint during transcription elongation by driving premature transcription termination of transcripts that are unfavorably configured for transcriptional elongation: the complex terminates transcription by (1) catalyzing dephosphorylation of the C-terminal domain (CTD) of Pol II subunit POLR2A/RPB1 and SUPT5H/SPT5, (2) degrading the exiting nascent RNA transcript via endonuclease activity and (3) promoting the release of Pol II from bound DNA. The integrator complex is also involved in terminating the synthesis of non-coding Pol II transcripts, such as enhancer RNAs (eRNAs), small nuclear RNAs (snRNAs), telomerase RNAs and long non-coding RNAs (lncRNAs). Within the integrator complex, INTS14 is part of the integrator tail module that acts as a platform for the recruitment of transcription factors at promoters. In Bos taurus (Bovine), this protein is Integrator complex subunit 14.